Consider the following 894-residue polypeptide: Leucine--tRNA ligase, mitochondrial (894 aa).

A mitochondrion-targeting transit peptide spans 1–9 (MLPRPSSRF). The 'HIGH' region signature appears at 56–66 (PYPSGVLHIGH). Positions 646–650 (KMSKS) match the 'KMSKS' region motif. Lysine 649 serves as a coordination point for ATP.

This sequence belongs to the class-I aminoacyl-tRNA synthetase family.

The protein resides in the mitochondrion matrix. The enzyme catalyses tRNA(Leu) + L-leucine + ATP = L-leucyl-tRNA(Leu) + AMP + diphosphate. In Saccharomyces paradoxus (Yeast), this protein is Leucine--tRNA ligase, mitochondrial (NAM2).